Consider the following 480-residue polypeptide: PTS system sucrose-specific EIIBC component (480 aa).

The PTS EIIB type-1 domain occupies 4-87 (KKSAENILQA…EKITGKEASS (84 aa)). The active-site Phosphocysteine intermediate; for EIIB activity is the cysteine 26. Helical transmembrane passes span 109–129 (LSDIFVPIIPAIVAGGLLMGI), 158–178 (MINIFANAPFTLLPILIGFSA), 182–202 (FGGNAYLGAALGMILVHPELM), 264–284 (LLTPLLAILSTGFITFSFVGP), 303–323 (FGGAIGGLIFGLLYAPIVITG), 349–369 (PIATMSNIAQGAAALAAFFII), 405–425 (PFIGAIVGSGIGSAYIAFFKV), and 449–469 (LHYGIAMIIAFIVAFGVTYAL). Residues 120 to 480 (IVAGGLLMGI…YRKKYRNIEA (361 aa)) enclose the PTS EIIC type-1 domain.

The protein resides in the cell membrane. The enzyme catalyses N(pros)-phospho-L-histidyl-[protein](out) + sucrose = sucrose 6(G)-phosphate(in) + L-histidyl-[protein]. Its function is as follows. The phosphoenolpyruvate-dependent sugar phosphotransferase system (sugar PTS), a major carbohydrate active transport system, catalyzes the phosphorylation of incoming sugar substrates concomitantly with their translocation across the cell membrane. This system is involved in sucrose transport. This Staphylococcus xylosus protein is PTS system sucrose-specific EIIBC component.